Consider the following 167-residue polypeptide: HTH-type transcriptional repressor IacR (167 aa).

The segment covering 1 to 10 (MSNAKNTSAA) has biased composition (polar residues). The tract at residues 1-25 (MSNAKNTSAASPARKGHSHHDPASD) is disordered. One can recognise an HTH marR-type domain in the interval 30-162 (EDFPFYWLAR…LNRMLEVVFH (133 aa)). Positions 76–99 (ISEISTHAIAKLSTITKIVYRMKE) form a DNA-binding region, H-T-H motif.

Exposure to indole-3-acetic acid (IAA) probably relieves the repressor activity. Functionally, probably acts as a repressor of iacA expression. This chain is HTH-type transcriptional repressor IacR, found in Pseudomonas putida (Arthrobacter siderocapsulatus).